Consider the following 316-residue polypeptide: Homoserine kinase (316 aa).

96-106 is a binding site for ATP; sequence PHGRGLGSSGA.

Belongs to the GHMP kinase family. Homoserine kinase subfamily.

The protein resides in the cytoplasm. The enzyme catalyses L-homoserine + ATP = O-phospho-L-homoserine + ADP + H(+). Its pathway is amino-acid biosynthesis; L-threonine biosynthesis; L-threonine from L-aspartate: step 4/5. In terms of biological role, catalyzes the ATP-dependent phosphorylation of L-homoserine to L-homoserine phosphate. This is Homoserine kinase from Clavibacter michiganensis subsp. michiganensis (strain NCPPB 382).